Consider the following 273-residue polypeptide: Medium-wave-sensitive opsin 1 (273 aa).

Topologically, residues 1 to 5 (APRWV) are extracellular. A helical membrane pass occupies residues 6-30 (YHLTSAWMVFVVIASVFTNGLVLAA). At 31–42 (TMRFKKLRHPLN) the chain is on the cytoplasmic side. Residues 43–68 (WILVNLAIADLVETIIASTISVVNQM) traverse the membrane as a helical segment. Residues 69–82 (YGYFVLGHPLCVVE) are Extracellular-facing. A disulfide bridge connects residues Cys79 and Cys156. A helical membrane pass occupies residues 83–102 (GYTASLCGITGLWSLAIISW). The Cytoplasmic segment spans residues 103–121 (ERWMVVCRPFGNVRFDAKL). Residues 122–145 (AIAGIAFSWIWAAVWTAPPIFGWS) traverse the membrane as a helical segment. Residues 146–171 (RYWPHGLKTSCGPDVFSGSSYPGVQS) lie on the Extracellular side of the membrane. Residues 172 to 199 (YMIVLMITCCFIPLSVIVLCYLQVWLAI) traverse the membrane as a helical segment. Residues 200–221 (RAVAKQQKESESTQKAEKEVTR) lie on the Cytoplasmic side of the membrane. A helical membrane pass occupies residues 222–245 (MVMVMIFAFCLCWGPYAFFACFAA). Residues 246–253 (AHPGYAFH) are Extracellular-facing. A helical membrane pass occupies residues 254 to 273 (PLVAALPAYFAKSATIYNPI). Lys265 bears the N6-(retinylidene)lysine mark.

This sequence belongs to the G-protein coupled receptor 1 family. Opsin subfamily. Monomer. Homodimer. Homotetramer. Post-translationally, O-glycosylated. In terms of processing, phosphorylated on some or all of the serine and threonine residues present in the C-terminal region. As to expression, the three color pigments are found in the cone photoreceptor cells.

Its subcellular location is the membrane. Its function is as follows. Visual pigments are the light-absorbing molecules that mediate vision. They consist of an apoprotein, opsin, covalently linked to cis-retinal. This chain is Medium-wave-sensitive opsin 1 (OPN1MW), found in Odocoileus virginianus virginianus (Virginia white-tailed deer).